The following is a 663-amino-acid chain: RING finger protein 145 (663 aa).

The next 14 membrane-spanning stretches (helical) occupy residues 53–73, 77–97, 123–143, 146–166, 168–188, 205–222, 225–245, 275–295, 316–336, 340–360, 384–404, 410–430, 460–480, and 482–502; these read YLAL…LTLP, LVQL…HQIS, FTTA…VMKT, IWLF…VPLE, IVII…YFLG, LVQV…MSLW, LVVP…QIYS, YSLL…LTLC, TEGV…LQVV, FLLS…MLEI, SLCL…CQFF, LLII…TLFI, LLEF…TIFG, and WTVM…WLRA. A YLYF motif motif is present at residues 81–84; sequence YLYF. Cysteine 537 is an active-site residue. Residues 537–575 form an RING-type; atypical zinc finger; sequence CAICYQDMKSAVITPCSHFFHAGCLKKWLYVQETCPLCH. A disordered region spans residues 607–663; it reads EGTEPPGQEHTPGTRIQEGSRDNNEYIARRPDNQEGAFDPKEYPHSAKDEAHPVESA. Residues 624–663 are compositionally biased toward basic and acidic residues; it reads EGSRDNNEYIARRPDNQEGAFDPKEYPHSAKDEAHPVESA.

In terms of assembly, interacts (via YLYF motif) with INSIG1 and INSIG2.

The protein resides in the endoplasmic reticulum membrane. It carries out the reaction S-ubiquitinyl-[E2 ubiquitin-conjugating enzyme]-L-cysteine + [acceptor protein]-L-lysine = [E2 ubiquitin-conjugating enzyme]-L-cysteine + N(6)-ubiquitinyl-[acceptor protein]-L-lysine.. Its function is as follows. E3 ubiquitin ligase that catalyzes the direct transfer of ubiquitin from E2 ubiquitin-conjugating enzyme to a specific substrate. In response to bacterial infection, negatively regulates the phagocyte oxidative burst by controlling the turnover of the NADPH oxidase complex subunits. Promotes monoubiquitination of CYBA and 'Lys-48'-linked polyubiquitination and degradation of CYBB NADPH oxidase catalytic subunits, both essential for the generation of antimicrobial reactive oxygen species. Involved in the maintenance of cholesterol homeostasis. In response to high sterol concentrations ubiquitinates HMGCR, a rate-limiting enzyme in cholesterol biosynthesis, and targets it for degradation. The interaction with INSIG1 is required for this function. In addition, triggers ubiquitination of SCAP, likely inhibiting its transport to the Golgi apparatus and the subsequent processing/maturation of SREBPF2, ultimately down-regulating cholesterol biosynthesis. The sequence is that of RING finger protein 145 from Homo sapiens (Human).